A 547-amino-acid polypeptide reads, in one-letter code: Glucocorticoid-induced transcript 1 protein (547 aa).

Residues 1 to 13 (MSTASSSSSSSSS) show a composition bias toward low complexity. Disordered stretches follow at residues 1 to 55 (MSTA…APAA) and 72 to 285 (LLRG…LSNI). At S20 the chain carries Phosphoserine. The segment covering 26–38 (SAAGSPPAVAAAG) has biased composition (low complexity). Residues 39 to 50 (SGNGAGGGGGVG) show a composition bias toward gly residues. A phosphoserine mark is found at S79, S105, S107, and S108. Low complexity predominate over residues 86–105 (AAAAASLGSLPGPGAARGPS). T110 carries the post-translational modification Phosphothreonine. A compositionally biased stretch (basic and acidic residues) spans 130 to 145 (RSPESHRRSSSPERRS). Residues 162 to 177 (RTSSTIRRTSSLDTIT) show a composition bias toward low complexity. Phosphoserine is present on residues S171 and S172. Phosphothreonine is present on residues T175 and T177. The span at 187 to 201 (RDPHVHYPSCMKDKA) shows a compositional bias: basic and acidic residues. S223 is subject to Phosphoserine. A coiled-coil region spans residues 225–254 (GSADQLKEQIAKLRQQLQRSKQSSRHSKEK). The segment covering 236–245 (KLRQQLQRSK) has biased composition (low complexity). A Phosphoserine modification is found at S258. Over residues 265–276 (ITISHTQATGSR) the composition is skewed to polar residues. T266 carries the post-translational modification Phosphothreonine. S303 is subject to Phosphoserine. A compositionally biased stretch (basic and acidic residues) spans 319-331 (EVSKPLDIPDGRR). The tract at residues 319–417 (EVSKPLDIPD…KPNNSYMFKR (99 aa)) is disordered. Residues 339–356 (RSSSTRSIDTQTPSVQER) show a composition bias toward polar residues. T343 is modified (phosphothreonine). A Phosphoserine modification is found at S345. T350 carries the phosphothreonine modification. Low complexity predominate over residues 357-369 (SSSCSSHSPCVSP). Residues S394, S398, S406, S412, and S480 each carry the phosphoserine modification. The span at 505 to 520 (SLSDDTSTAGSMEASV) shows a compositional bias: polar residues. The disordered stretch occupies residues 505–530 (SLSDDTSTAGSMEASVQQPSQQQQLL). Residues 521-530 (QQPSQQQQLL) show a composition bias toward low complexity.

Predominantly expressed in lung, spleen, thymus and testis and, at lower levels, in brain, bone marrow, peripheral leukocytes, skin and trachea.

The chain is Glucocorticoid-induced transcript 1 protein (GLCCI1) from Homo sapiens (Human).